The following is a 503-amino-acid chain: Cytochrome P450 3A17 (503 aa).

Cysteine 442 is a binding site for heme.

The protein belongs to the cytochrome P450 family. Heme serves as cofactor.

Its subcellular location is the endoplasmic reticulum membrane. It is found in the microsome membrane. The catalysed reaction is an organic molecule + reduced [NADPH--hemoprotein reductase] + O2 = an alcohol + oxidized [NADPH--hemoprotein reductase] + H2O + H(+). Its function is as follows. Cytochromes P450 are a group of heme-thiolate monooxygenases. In liver microsomes, this enzyme is involved in an NADPH-dependent electron transport pathway. It oxidizes a variety of structurally unrelated compounds, including steroids, fatty acids, and xenobiotics. The sequence is that of Cytochrome P450 3A17 (CYP3A17) from Cavia porcellus (Guinea pig).